Reading from the N-terminus, the 536-residue chain is Alpha-1,3-mannosyl-glycoprotein 4-beta-N-acetylglucosaminyltransferase A (536 aa).

The Cytoplasmic portion of the chain corresponds to 1–6 (MRLRNG). Residues 7-27 (TVATALVFITTFLSLSWYTAW) form a helical; Signal-anchor for type II membrane protein membrane-spanning segment. Positions 28–54 (QNGKEKLMAYQREFHALKERLRIAEHR) form a coiled coil. Over 28–536 (QNGKEKLMAY…EIHIKRNPAD (509 aa)) the chain is Lumenal. Residues Asn77 and Asn458 are each glycosylated (N-linked (GlcNAc...) asparagine).

It belongs to the glycosyltransferase 54 family. A divalent metal cation is required as a cofactor. N-glycosylated.

The protein localises to the golgi apparatus membrane. Its subcellular location is the secreted. It carries out the reaction N(4)-{beta-D-GlcNAc-(1-&gt;2)-alpha-D-Man-(1-&gt;3)-[beta-D-GlcNAc-(1-&gt;2)-alpha-D-Man-(1-&gt;6)]-beta-D-Man-(1-&gt;4)-beta-D-GlcNAc-(1-&gt;4)-beta-D-GlcNAc}-L-asparaginyl-[protein] + UDP-N-acetyl-alpha-D-glucosamine = N(4)-{beta-D-GlcNAc-(1-&gt;2)-[beta-D-GlcNAc-(1-&gt;4)]-alpha-D-Man-(1-&gt;3)-[beta-D-GlcNAc-(1-&gt;2)-alpha-D-Man-(1-&gt;6)]-beta-D-Man-(1-&gt;4)-beta-D-GlcNAc-(1-&gt;4)-beta-D-GlcNAc}-L-asparaginyl-[protein] + UDP + H(+). It catalyses the reaction an N(4)-{beta-D-GlcNAc-(1-&gt;2)-alpha-D-Man-(1-&gt;3)-[alpha-D-Man-(1-&gt;6)]-beta-D-Man-(1-&gt;4)-beta-D-GlcNAc-(1-&gt;4)-beta-D-GlcNAc}-L-asparaginyl-[protein] + UDP-N-acetyl-alpha-D-glucosamine = an N(4)-{beta-D-GlcNAc-(1-&gt;2)-[beta-D-GlcNAc-(1-&gt;4)]-alpha-D-Man-(1-&gt;3)-[alpha-D-Man-(1-&gt;6)]-beta-D-Man-(1-&gt;4)-beta-D-GlcNAc-(1-&gt;4)-beta-D-GlcNAc}-L-asparaginyl-[protein] + UDP + H(+). The catalysed reaction is an N(4)-{beta-D-GlcNAc-(1-&gt;2)-alpha-D-Man-(1-&gt;3)-[beta-D-GlcNAc-(1-&gt;2)-[beta-D-GlcNAc-(1-&gt;6)]-alpha-D-Man-(1-&gt;6)]-beta-D-Man-(1-&gt;4)-beta-D-GlcNAc-(1-&gt;4)-beta-D-GlcNAc}-L-asparaginyl-[protein] + UDP-N-acetyl-alpha-D-glucosamine = an N(4)-{beta-D-GlcNAc-(1-&gt;2)-[beta-D-GlcNAc-(1-&gt;4)]-alpha-D-Man-(1-&gt;3)-[beta-D-GlcNAc-(1-&gt;2)-[beta-D-GlcNAc-(1-&gt;6)]-alpha-D-Man-(1-&gt;6)]-beta-D-Man-(1-&gt;4)-beta-D-GlcNAc-(1-&gt;4)-beta-D-GlcNAc}-L-asparaginyl-[protein] + UDP + H(+). The enzyme catalyses an N(4)-{beta-D-GlcNAc-(1-&gt;2)-alpha-D-Man-(1-&gt;3)-[beta-D-GlcNAc-(1-&gt;2)-alpha-D-Man-(1-&gt;6)]-beta-D-Man-(1-&gt;4)-beta-D-GlcNAc-(1-&gt;4)-[alpha-L-Fuc-(1-&gt;6)]-beta-D-GlcNAc}-L-asparaginyl-[protein] + UDP-N-acetyl-alpha-D-glucosamine = N(4)-{beta-D-GlcNAc-(1-&gt;2)-[beta-D-GlcNAc-(1-&gt;4)]-alpha-D-Man-(1-&gt;3)-[beta-D-GlcNAc-(1-&gt;2)-alpha-D-Man-(1-&gt;6)]-beta-D-Man-(1-&gt;4)-beta-D-GlcNAc-(1-&gt;4)-[alpha-L-Fuc-(1-&gt;6)]-beta-D-GlcNAc}-asparaginyl-[protein] + UDP + H(+). It carries out the reaction an N(4)-{beta-D-GlcNAc-(1-&gt;2)-alpha-D-Man-(1-&gt;3)-[beta-D-Gal-(1-&gt;4)-beta-D-GlcNAc-(1-&gt;2)-alpha-D-Man-(1-&gt;6)]-beta-D-Man-(1-&gt;4)-beta-D-GlcNAc-(1-&gt;4)-beta-D-GlcNAc}-L-asparaginyl-[protein] + UDP-N-acetyl-alpha-D-glucosamine = an N(4)-{beta-D-GlcNAc-(1-&gt;2)-[beta-D-GlcNAc-(1-&gt;4)]-alpha-D-Man-(1-&gt;3)-[beta-D-Gal-(1-&gt;4)-beta-D-GlcNAc-(1-&gt;2)-alpha-D-Man-(1-&gt;6)]-beta-D-Man-(1-&gt;4)-beta-D-GlcNAc-(1-&gt;4)-beta-D-GlcNAc}-L-asparaginyl-[protein] + UDP + H(+). It catalyses the reaction N(4)-{beta-D-GlcNAc-(1-&gt;2)-alpha-D-Man-(1-&gt;3)-[alpha-D-Man-(1-&gt;3)-{alpha-D-Man-(1-&gt;6)}-alpha-D-Man-(1-&gt;6)]-beta-D-Man-(1-&gt;4)-beta-D-GlcNAc-(1-&gt;4)-beta-D-GlcNAc}-asparaginyl-[protein] + UDP-N-acetyl-alpha-D-glucosamine = N(4)-{beta-D-GlcNAc-(1-&gt;2)-[beta-D-GlcNAc-(1-&gt;4)]-alpha-D-Man-(1-&gt;3)-[alpha-D-Man-(1-&gt;3)-{alpha-D-Man-(1-&gt;6)}-alpha-D-Man-(1-&gt;6)]-beta-D-Man-(1-&gt;4)-beta-D-GlcNAc-(1-&gt;4)-beta-D-GlcNAc}-asparaginyl-[protein] + UDP + H(+). The catalysed reaction is N(4)-{beta-D-GlcNAc-(1-&gt;2)-alpha-D-Man-(1-&gt;3)-beta-D-Man-(1-&gt;4)-beta-D-GlcNAc-(1-&gt;4)-beta-D-GlcNAc}-asparaginyl-[protein] + UDP-N-acetyl-alpha-D-glucosamine = N(4)-{beta-D-GlcNAc-(1-&gt;2)-[beta-D-GlcNAc-(1-&gt;4)]-alpha-D-Man-(1-&gt;3)-beta-D-Man-(1-&gt;4)-beta-D-GlcNAc-(1-&gt;4)-beta-D-GlcNAc}-asparaginyl-[protein] + UDP + H(+). It functions in the pathway protein modification; protein glycosylation. With respect to regulation, inhibited by UDP. Glycosyltransferase that catalyze the transfer of GlcNAc from UDP-GlcNAc to the GlcNAcbeta1-2Manalpha1-3 arm of the core structure of N-linked glycans through a beta1-4 linkage and participates in the production of tri- and tetra-antennary N-linked sugar chains. Involved in glucose transport by mediating SLC2A2/GLUT2 glycosylation, thereby controlling cell-surface expression of SLC2A2 in pancreatic beta cells. In Xenopus tropicalis (Western clawed frog), this protein is Alpha-1,3-mannosyl-glycoprotein 4-beta-N-acetylglucosaminyltransferase A.